A 235-amino-acid polypeptide reads, in one-letter code: Aspartate/glutamate leucyltransferase (235 aa).

This sequence belongs to the R-transferase family. Bpt subfamily.

It localises to the cytoplasm. The enzyme catalyses N-terminal L-glutamyl-[protein] + L-leucyl-tRNA(Leu) = N-terminal L-leucyl-L-glutamyl-[protein] + tRNA(Leu) + H(+). It catalyses the reaction N-terminal L-aspartyl-[protein] + L-leucyl-tRNA(Leu) = N-terminal L-leucyl-L-aspartyl-[protein] + tRNA(Leu) + H(+). In terms of biological role, functions in the N-end rule pathway of protein degradation where it conjugates Leu from its aminoacyl-tRNA to the N-termini of proteins containing an N-terminal aspartate or glutamate. In Pseudomonas paraeruginosa (strain DSM 24068 / PA7) (Pseudomonas aeruginosa (strain PA7)), this protein is Aspartate/glutamate leucyltransferase.